Consider the following 177-residue polypeptide: Cytoglobin-1 (177 aa).

Positions 16–165 (PLTDKERVMI…LCCSIKAVYE (150 aa)) constitute a Globin domain. Residues His79 and His111 each coordinate heme b.

Belongs to the globin family. In terms of assembly, monomeric.

It is found in the cytoplasm. It localises to the nucleus. The catalysed reaction is Fe(II)-heme b-[protein] + nitric oxide + O2 = Fe(III)-heme b-[protein] + nitrate. It catalyses the reaction Fe(III)-heme b-[protein] + nitric oxide + H2O = Fe(II)-heme b-[protein] + nitrite + 2 H(+). It carries out the reaction 2 superoxide + 2 H(+) = H2O2 + O2. The enzyme catalyses H2O2 + AH2 = A + 2 H2O. Functionally, probable multifunctional globin with a hexacoordinated heme iron required for the catalysis of various reactions depending on redox condition of the cell as well as oxygen availability. Has a nitric oxide dioxygenase (NOD) activity and is most probably involved in cell-mediated and oxygen-dependent nitric oxide consumption. Under normoxic conditions functions as a nitric oxide dioxygenase (NOD) but under hypoxic conditions the globin may switch its function to that of a nitrite (NO2) reductase (NiR), generating nitric oxide. Could also have peroxidase and superoxide dismutase activities, detoxifying reactive oxygen species and protecting cells against oxidative stress. Also binds dioxygen with low affinity and could function as an oxygen sensor but has probably no function as a respiratory oxygen carrier. This chain is Cytoglobin-1, found in Oryzias latipes (Japanese rice fish).